A 116-amino-acid chain; its full sequence is Ribonuclease P protein component 2 (116 aa).

It belongs to the eukaryotic/archaeal RNase P protein component 2 family. In terms of assembly, consists of a catalytic RNA component and at least 4-5 protein subunits.

The protein resides in the cytoplasm. The enzyme catalyses Endonucleolytic cleavage of RNA, removing 5'-extranucleotides from tRNA precursor.. Its function is as follows. Part of ribonuclease P, a protein complex that generates mature tRNA molecules by cleaving their 5'-ends. This is Ribonuclease P protein component 2 from Methanosarcina mazei (strain ATCC BAA-159 / DSM 3647 / Goe1 / Go1 / JCM 11833 / OCM 88) (Methanosarcina frisia).